We begin with the raw amino-acid sequence, 240 residues long: Probable transcriptional regulatory protein Hac_0344 (240 aa).

Belongs to the TACO1 family.

It localises to the cytoplasm. The polypeptide is Probable transcriptional regulatory protein Hac_0344 (Helicobacter acinonychis (strain Sheeba)).